The chain runs to 723 residues: Polyribonucleotide nucleotidyltransferase (723 aa).

Mg(2+) is bound by residues aspartate 488 and aspartate 494. A KH domain is found at 555–614 (PKIITLNIKPEKIKDVIGPGGKQINAIIEETGVKIDIEQDGTVYIASQDQAMNRKAIAII). An S1 motif domain is found at 624 to 692 (GEVYTGKVRR…HQGRVNLSRK (69 aa)). The interval 692 to 723 (KALLEKKEQPEGDKKPQAEKKFYPKTKKPESK) is disordered. The segment covering 693–723 (ALLEKKEQPEGDKKPQAEKKFYPKTKKPESK) has biased composition (basic and acidic residues).

It belongs to the polyribonucleotide nucleotidyltransferase family. It depends on Mg(2+) as a cofactor.

Its subcellular location is the cytoplasm. It catalyses the reaction RNA(n+1) + phosphate = RNA(n) + a ribonucleoside 5'-diphosphate. Its function is as follows. Involved in mRNA degradation. Catalyzes the phosphorolysis of single-stranded polyribonucleotides processively in the 3'- to 5'-direction. In Listeria welshimeri serovar 6b (strain ATCC 35897 / DSM 20650 / CCUG 15529 / CIP 8149 / NCTC 11857 / SLCC 5334 / V8), this protein is Polyribonucleotide nucleotidyltransferase.